The primary structure comprises 347 residues: Dihydroorotase (347 aa).

The Zn(2+) site is built by His-14 and His-16. Residues 16–18 (HLR) and Asn-42 contribute to the substrate site. Zn(2+) is bound by residues Lys-100, His-137, and His-175. Lys-100 bears the N6-carboxylysine mark. His-137 provides a ligand contact to substrate. Substrate is bound at residue Leu-220. Residue Asp-248 coordinates Zn(2+). The active site involves Asp-248. Substrate-binding residues include His-252 and Ala-264.

Belongs to the metallo-dependent hydrolases superfamily. DHOase family. Class II DHOase subfamily. In terms of assembly, homodimer. Requires Zn(2+) as cofactor.

It carries out the reaction (S)-dihydroorotate + H2O = N-carbamoyl-L-aspartate + H(+). It participates in pyrimidine metabolism; UMP biosynthesis via de novo pathway; (S)-dihydroorotate from bicarbonate: step 3/3. Functionally, catalyzes the reversible cyclization of carbamoyl aspartate to dihydroorotate. The polypeptide is Dihydroorotase (Stutzerimonas stutzeri (strain A1501) (Pseudomonas stutzeri)).